Consider the following 153-residue polypeptide: ORM1-like protein 3 (153 aa).

An important for ceramide level-sensing region spans residues M1–M17. Over M1–G21 the chain is Cytoplasmic. Helical transmembrane passes span I22–F42 and V43–F63. Residues L64–Q94 are Cytoplasmic-facing. The chain crosses the membrane as a helical span at residues F95–T117. Over K118–Q121 the chain is Extracellular. The helical transmembrane segment at V122 to L142 threads the bilayer. P137 is subject to Hydroxyproline. Topologically, residues H143 to Y153 are cytoplasmic.

Belongs to the ORM family. In terms of assembly, ceramide-sensitive subunit of the serine palmitoyltransferase (SPT) complex, which is also composed of SPTLC1, SPTLC2/3 and SPTSSA/B. In terms of processing, when hydroxylated at Pro-137, ubiquitinated via 'Lys-48'-linkage, leading to proteasomal degradation. In endothelial cells, ORMDL3 proteasomal degradation is controlled by the sphingosine 1-phosphate receptor signaling pathway.

It is found in the endoplasmic reticulum membrane. Its function is as follows. Plays an essential role in the homeostatic regulation of sphingolipid de novo biosynthesis by modulating the activity of the serine palmitoyltransferase (SPT) in response to ceramide levels. When complexed to SPT, the binding of ceramides to its N-terminus stabilizes a conformation that block SPT substrate entry, hence preventing SPT catalytic activity. Through this mechanism, maintains ceramide levels at sufficient concentrations for the production of complex sphingolipids, but which prevents the accumulation of ceramides to levels that trigger apoptosis. The polypeptide is ORM1-like protein 3 (Ormdl3) (Mus musculus (Mouse)).